We begin with the raw amino-acid sequence, 944 residues long: Bifunctional uridylyltransferase/uridylyl-removing enzyme (944 aa).

The uridylyltransferase stretch occupies residues 1 to 371 (MRDLDFTNIL…RFTHRNRKIA (371 aa)). Residues 372–727 (GSVEFVEDRG…VRTDSFHAIT (356 aa)) are uridylyl-removing. The 117-residue stretch at 488 to 604 (VDEHLIRTVD…TDFADRVQSL (117 aa)) folds into the HD domain. ACT domains follow at residues 728–809 (EITV…EVIA) and 839–918 (VIEV…LRER). The disordered stretch occupies residues 911 to 944 (EEDELRERMPSGIIAPAATARTPPASEKKAGSPI). The span at 925–935 (APAATARTPPA) shows a compositional bias: low complexity.

The protein belongs to the GlnD family. Requires Mg(2+) as cofactor.

The enzyme catalyses [protein-PII]-L-tyrosine + UTP = [protein-PII]-uridylyl-L-tyrosine + diphosphate. It carries out the reaction [protein-PII]-uridylyl-L-tyrosine + H2O = [protein-PII]-L-tyrosine + UMP + H(+). Uridylyltransferase (UTase) activity is inhibited by glutamine, while glutamine likely activates uridylyl-removing (UR) activity. Modifies, by uridylylation and deuridylylation, the PII regulatory proteins GlnB and GlnK, in response to the nitrogen status of the cell that GlnD senses through the glutamine level. Under low glutamine levels, catalyzes the conversion of the PII proteins and UTP to PII-UMP and PPi, while under higher glutamine levels, GlnD likely hydrolyzes PII-UMP to PII and UMP (deuridylylation). Thus, controls uridylylation state and activity of the PII proteins, and plays an important role in the regulation of nitrogen metabolism. The sequence is that of Bifunctional uridylyltransferase/uridylyl-removing enzyme from Rhizobium leguminosarum bv. viciae.